The chain runs to 190 residues: DNA-invertase (190 aa).

One can recognise a Resolvase/invertase-type recombinase catalytic domain in the interval 2–135 (ATIGYIRVST…AGLAAARAQG (134 aa)). Ser10 functions as the O-(5'-phospho-DNA)-serine intermediate in the catalytic mechanism. A DNA-binding region (H-T-H motif) is located at residues 162-181 (RQQLAIIFGIGVSTLYRYFP).

Belongs to the site-specific recombinase resolvase family.

Functionally, a DNA fragment of approximately 900 base pairs, adjacent to the fljB (H2) gene, which specifies the synthesis of phase-2 flagellin, can exist in either orientation with respect to fljB. The orientation of the inversion region controls expression of fljB. The hin gene occupies about two-thirds of the inversion region; it is required for the inversion of the fljB controlling region. The protein is DNA-invertase (hin) of Salmonella abortus-equi.